The sequence spans 168 residues: Photosystem I assembly protein Ycf3 (168 aa).

TPR repeat units follow at residues 35-68 (AFTY…EIDP), 72-105 (SYIL…NPFL), and 120-153 (GEQA…TPGN).

Belongs to the Ycf3 family.

It is found in the plastid. The protein localises to the chloroplast thylakoid membrane. Essential for the assembly of the photosystem I (PSI) complex. May act as a chaperone-like factor to guide the assembly of the PSI subunits. The chain is Photosystem I assembly protein Ycf3 from Solanum lycopersicum (Tomato).